The chain runs to 42 residues: Photosystem I reaction center subunit IX (42 aa).

The helical transmembrane segment at 7–27 (YLSVAPVLSTLWFGALAGLLI) threads the bilayer.

The protein belongs to the PsaJ family.

Its subcellular location is the plastid. It is found in the chloroplast thylakoid membrane. May help in the organization of the PsaE and PsaF subunits. The chain is Photosystem I reaction center subunit IX from Guizotia abyssinica (Niger).